Reading from the N-terminus, the 576-residue chain is Arginine--tRNA ligase (576 aa).

A 'HIGH' region motif is present at residues 122–132 (PNVAKEMHVGH).

Belongs to the class-I aminoacyl-tRNA synthetase family. In terms of assembly, monomer.

It localises to the cytoplasm. It carries out the reaction tRNA(Arg) + L-arginine + ATP = L-arginyl-tRNA(Arg) + AMP + diphosphate. The polypeptide is Arginine--tRNA ligase (Erwinia tasmaniensis (strain DSM 17950 / CFBP 7177 / CIP 109463 / NCPPB 4357 / Et1/99)).